Consider the following 185-residue polypeptide: Ribulose bisphosphate carboxylase small subunit, chloroplastic 2 (185 aa).

Residues 1–45 constitute a chloroplast transit peptide; sequence MAAVIAKSSVSAAVARPARSSVRPMAALKPAVKAAPVAAPAQANQ. The residue at position 46 (methionine 46) is an N-methylmethionine.

The protein belongs to the RuBisCO small chain family. As to quaternary structure, heterohexadecamer of 8 large and 8 small subunits.

The protein localises to the plastid. Its subcellular location is the chloroplast. The protein resides in the chloroplast stroma. RuBisCO catalyzes two reactions: the carboxylation of D-ribulose 1,5-bisphosphate, the primary event in carbon dioxide fixation, as well as the oxidative fragmentation of the pentose substrate. Both reactions occur simultaneously and in competition at the same active site. Although the small subunit is not catalytic it is essential for maximal activity. The sequence is that of Ribulose bisphosphate carboxylase small subunit, chloroplastic 2 from Chlamydomonas reinhardtii (Chlamydomonas smithii).